A 374-amino-acid chain; its full sequence is Mannitol-1-phosphate 5-dehydrogenase (374 aa).

Position 3–14 (3–14) interacts with NAD(+); it reads AVHFGAGNIGRG.

It belongs to the mannitol dehydrogenase family.

The catalysed reaction is D-mannitol 1-phosphate + NAD(+) = beta-D-fructose 6-phosphate + NADH + H(+). This chain is Mannitol-1-phosphate 5-dehydrogenase, found in Shouchella clausii (strain KSM-K16) (Alkalihalobacillus clausii).